Reading from the N-terminus, the 859-residue chain is Active breakpoint cluster region-related protein (859 aa).

Positions 26–84 are disordered; sequence TDEYDGEGNEEQKGPPEGSETMPYIDESPTMSPQLSARSQGGGDGVSPTPPEGLAPGVE. Positions 54-64 are enriched in polar residues; the sequence is PTMSPQLSARS. Ser57 bears the Phosphoserine mark. The region spanning 91–284 is the DH domain; sequence MRKLVLSGFL…QNFLSSINED (194 aa). Residues 301-459 enclose the PH domain; that stretch reads QLVKDGFLVE…WREAIQKLQK (159 aa). A C2 domain is found at 484 to 613; the sequence is TVHNIPVTSN…ETKNWHTDVI (130 aa). The Rho-GAP domain occupies 647–845; that stretch reads VKISVVTKRE…YYLQHPPISF (199 aa).

As to quaternary structure, interacts with DLG4. In terms of tissue distribution, highly enriched in the brain. Much weaker expression in heart, lung and muscle.

It is found in the cell projection. It localises to the dendritic spine. The protein localises to the axon. The protein resides in the synapse. Protein with a unique structure having two opposing regulatory activities toward small GTP-binding proteins. The C-terminus is a GTPase-activating protein domain which stimulates GTP hydrolysis by RAC1, RAC2 and CDC42. Accelerates the intrinsic rate of GTP hydrolysis of RAC1 or CDC42, leading to down-regulation of the active GTP-bound form. The central Dbl homology (DH) domain functions as a guanine nucleotide exchange factor (GEF) that modulates the GTPases CDC42, RHOA and RAC1. Promotes the conversion of CDC42, RHOA and RAC1 from the GDP-bound to the GTP-bound form. Functions as an important negative regulator of neuronal RAC1 activity. Regulates macrophage functions such as CSF-1 directed motility and phagocytosis through the modulation of RAC1 activity. The polypeptide is Active breakpoint cluster region-related protein (Homo sapiens (Human)).